We begin with the raw amino-acid sequence, 354 residues long: Uroporphyrinogen decarboxylase (354 aa).

Substrate is bound by residues 27–31 (RQAGR), F46, D77, Y153, T208, and H326.

Belongs to the uroporphyrinogen decarboxylase family. In terms of assembly, homodimer.

The protein localises to the cytoplasm. The enzyme catalyses uroporphyrinogen III + 4 H(+) = coproporphyrinogen III + 4 CO2. It functions in the pathway porphyrin-containing compound metabolism; protoporphyrin-IX biosynthesis; coproporphyrinogen-III from 5-aminolevulinate: step 4/4. In terms of biological role, catalyzes the decarboxylation of four acetate groups of uroporphyrinogen-III to yield coproporphyrinogen-III. In Neisseria meningitidis serogroup A / serotype 4A (strain DSM 15465 / Z2491), this protein is Uroporphyrinogen decarboxylase.